Here is a 459-residue protein sequence, read N- to C-terminus: UDP-N-acetylmuramoylalanine--D-glutamate ligase (459 aa).

ATP is bound at residue glycine 120 to threonine 126.

Belongs to the MurCDEF family.

It is found in the cytoplasm. It catalyses the reaction UDP-N-acetyl-alpha-D-muramoyl-L-alanine + D-glutamate + ATP = UDP-N-acetyl-alpha-D-muramoyl-L-alanyl-D-glutamate + ADP + phosphate + H(+). The protein operates within cell wall biogenesis; peptidoglycan biosynthesis. Cell wall formation. Catalyzes the addition of glutamate to the nucleotide precursor UDP-N-acetylmuramoyl-L-alanine (UMA). The polypeptide is UDP-N-acetylmuramoylalanine--D-glutamate ligase (Lactobacillus helveticus (strain DPC 4571)).